Here is a 608-residue protein sequence, read N- to C-terminus: DNA mismatch repair protein MutL (608 aa).

Belongs to the DNA mismatch repair MutL/HexB family.

This protein is involved in the repair of mismatches in DNA. It is required for dam-dependent methyl-directed DNA mismatch repair. May act as a 'molecular matchmaker', a protein that promotes the formation of a stable complex between two or more DNA-binding proteins in an ATP-dependent manner without itself being part of a final effector complex. This chain is DNA mismatch repair protein MutL, found in Anoxybacillus flavithermus (strain DSM 21510 / WK1).